Consider the following 243-residue polypeptide: RNA-binding protein with serine-rich domain 1 homolog (243 aa).

Positions 48-92 (SSTRQFNNTRSPSGRSASRSSNFSHRSSSRDSFSSNRSYSSSLSR) are disordered. The segment covering 57 to 92 (RSPSGRSASRSSNFSHRSSSRDSFSSNRSYSSSLSR) has biased composition (low complexity). The RRM domain maps to 99-177 (RTILVENLTR…EELFVSIKRF (79 aa)). The disordered stretch occupies residues 189 to 243 (YENSYRPSRSQNNSHYNDKSFHRSRYSRARSRSPGSNISEYSDQSPPYHSYRHRP). The span at 193–203 (YRPSRSQNNSH) shows a compositional bias: polar residues. A compositionally biased stretch (basic residues) spans 210–219 (HRSRYSRARS). Over residues 222-235 (PGSNISEYSDQSPP) the composition is skewed to polar residues.

The protein belongs to the splicing factor SR family. As to quaternary structure, component of the active spliceosome.

It localises to the cytoplasm. It is found in the nucleus. Its function is as follows. Putative component of the spliceosome which enhances the formation of the ATP-dependent A complex of the spliceosome. may participate in mRNA 3'-end cleavage. Also mediates increase of mRNA abundance and translational efficiency. In Schizosaccharomyces pombe (strain 972 / ATCC 24843) (Fission yeast), this protein is RNA-binding protein with serine-rich domain 1 homolog.